A 223-amino-acid polypeptide reads, in one-letter code: Adenylate kinase 4, mitochondrial (223 aa).

15-20 (GSGKGT) is an a ribonucleoside 5'-triphosphate binding site. An NMP region spans residues 35 to 64 (SSGHLLRENLKTGTEVGDVAKQYLEKGLLV). Positions 36 and 41 each coordinate AMP. Lys-60 carries the post-translational modification N6-succinyllysine. AMP-binding positions include 62-64 (LLV), 89-92 (GFPR), and Gln-96. The interval 125-162 (RRWIHPSSGRVYNLDFNPPQVQGIDDITGEPLVQQEDD) is LID. A ribonucleoside 5'-triphosphate-binding positions include Arg-126 and 135 to 136 (VY). Arg-170 contacts AMP. Position 175 is an N6-acetyllysine (Lys-175). N6-acetyllysine; alternate is present on residues Lys-179 and Lys-186. An N6-succinyllysine; alternate mark is found at Lys-179 and Lys-186. An a ribonucleoside 5'-triphosphate-binding site is contributed by Thr-199.

It belongs to the adenylate kinase family. AK3 subfamily. As to quaternary structure, monomer. Interacts with SLC25A5/ANT2. Expressed in kidney, liver, stomach, brain, spinal cord, heart, ovary, oviduct, colon, jejunum, ileum and testis (at protein level). In the brain, expressed in the pyramidal cells of the cerebrum and glial cells in the cerebellum (at protein level). In the heart, expressed by myocytes (at protein level). In the kidney, expressed in the proximal to distal tubule in the cortex and the outer and inner zones of the medulla (at protein level). In the stomach, expressed in stratified squamous epithelia in the forestomach and in the gastric pit and mucus producing cells of the glandular stomach (at protein level). Expressed in epithelial cells of the jejunum, ileum, and colon (at protein level). In the testis, expressed by spermatocytes (at protein level). In the ovaries, expressed by oocytes, follicular epithelial cells, and corpus luteum cells (at protein level). In the oviduct, expressed in the epithelia of the isthmus and the ciliated cells of the ampulla (at protein level). Expressed in the pyramidal cells in the hippocampus.

It localises to the mitochondrion matrix. The enzyme catalyses a ribonucleoside 5'-phosphate + ATP = a ribonucleoside 5'-diphosphate + ADP. The catalysed reaction is AMP + ATP = 2 ADP. It carries out the reaction GTP + AMP = GDP + ADP. It catalyses the reaction CMP + ATP = CDP + ADP. The enzyme catalyses GTP + CMP = CDP + GDP. The catalysed reaction is dAMP + ATP = dADP + ADP. It carries out the reaction dCMP + ATP = dCDP + ADP. It catalyses the reaction a 2'-deoxyribonucleoside 5'-diphosphate + ATP = a 2'-deoxyribonucleoside 5'-triphosphate + ADP. The enzyme catalyses a ribonucleoside 5'-diphosphate + ATP = a ribonucleoside 5'-triphosphate + ADP. The catalysed reaction is GDP + ATP = GTP + ADP. It carries out the reaction CDP + GTP = CTP + GDP. It catalyses the reaction CDP + ATP = CTP + ADP. The enzyme catalyses UDP + ATP = UTP + ADP. The catalysed reaction is GTP + UDP = UTP + GDP. It carries out the reaction dADP + GTP = dATP + GDP. It catalyses the reaction dCDP + GTP = dCTP + GDP. The enzyme catalyses dCDP + ATP = dCTP + ADP. The catalysed reaction is dGDP + ATP = dGTP + ADP. It carries out the reaction dTDP + GTP = dTTP + GDP. It catalyses the reaction dTDP + ATP = dTTP + ADP. In terms of biological role, broad-specificity mitochondrial nucleoside phosphate kinase involved in cellular nucleotide homeostasis by catalyzing nucleoside-phosphate interconversions. Similar to other adenylate kinases, preferentially catalyzes the phosphorylation of the nucleoside monophosphate AMP with ATP as phosphate donor to produce ADP. Phosphorylates only AMP when using GTP as phosphate donor. In vitro, can also catalyze the phosphorylation of CMP, dAMP and dCMP and use GTP as an alternate phosphate donor. Moreover, exhibits a diphosphate kinase activity, producing ATP, CTP, GTP, UTP, TTP, dATP, dCTP and dGTP from the corresponding diphosphate substrates with either ATP or GTP as phosphate donors. Plays a role in controlling cellular ATP levels by regulating phosphorylation and activation of the energy sensor protein kinase AMPK. Plays a protective role in the cellular response to oxidative stress. The chain is Adenylate kinase 4, mitochondrial from Mus musculus (Mouse).